The primary structure comprises 1441 residues: Envelopment polyprotein (1441 aa).

Positions 1–13 (MIRMLVLIVVTAA) are cleaved as a signal peptide. Residues 14 to 200 (SPVYQRCFQD…GSIANSICQN (187 aa)) lie on the Lumenal side of the membrane. An N-linked (GlcNAc...) asparagine; by host glycan is attached at N57. Residues 201 to 221 (IEIIILVTLTLLIFILLSILS) form a helical membrane-spanning segment. The Cytoplasmic segment spans residues 222–305 (KTYICYLLMP…RAARVMCKSK (84 aa)). The chain crosses the membrane as a helical span at residues 306 to 326 (GPASILSIITAVLVLTFVTPI). The Lumenal portion of the chain corresponds to 327 to 365 (NSMVLGESKETFELEELPDDMLEMALRINSYYFTCILNY). Residues 366–386 (AVSWGLIIAGLLVGLIFKKYQ) form a helical membrane-spanning segment. Residues 387-452 (HRFLNIYAMY…LVQYKAKWMM (66 aa)) are Cytoplasmic-facing. Residues 453 to 473 (NFLIIYIFLILIKDSAIVGQA) form a helical membrane-spanning segment. At 474 to 1395 (TGTDFTTCLE…EPFKNLFGSY (922 aa)) the chain is on the lumenal side. 2 N-linked (GlcNAc...) asparagine; by host glycosylation sites follow: N490 and N1177. Residues 1396–1416 (IGIFYTFIISIIALLVIIYVL) form a helical membrane-spanning segment. Residues 1417–1441 (LPICFKLRDTLRKHDDAYKREMKIR) are Cytoplasmic-facing.

The protein belongs to the orthobunyavirus envelope glycoprotein family. As to quaternary structure, glycoprotein C and Glycoprotein N interact with each other. Specific enzymatic cleavages in vivo yield mature proteins including nonstructural protein NSm, glycoprotein C, and glycoprotein N.

It is found in the virion membrane. The protein localises to the host Golgi apparatus membrane. It localises to the host endoplasmic reticulum membrane. Glycoprotein C and Glycoprotein N interact with each other and are present at the surface of the virion. They are able to attach the virion to a cell receptor and to promote fusion of membranes after endocytosis of the virion. In Bunyavirus La Crosse, this protein is Envelopment polyprotein (GP).